A 192-amino-acid chain; its full sequence is Probable Brix domain-containing ribosomal biogenesis protein (192 aa).

The region spanning 2 to 191 (RPAAITTSQR…DFRTKDERMK (190 aa)) is the Brix domain.

Its function is as follows. Probably involved in the biogenesis of the ribosome. This is Probable Brix domain-containing ribosomal biogenesis protein from Methanopyrus kandleri (strain AV19 / DSM 6324 / JCM 9639 / NBRC 100938).